The sequence spans 100 residues: Integration host factor subunit alpha (100 aa).

The protein belongs to the bacterial histone-like protein family. Heterodimer of an alpha and a beta chain.

Functionally, this protein is one of the two subunits of integration host factor, a specific DNA-binding protein that functions in genetic recombination as well as in transcriptional and translational control. In Phenylobacterium zucineum (strain HLK1), this protein is Integration host factor subunit alpha.